The following is a 550-amino-acid chain: Efflux pump DEP3 (550 aa).

The segment at 1–33 (MSEQSTLAGPYTEKPGVESQNPTGDGKASFDET) is disordered. The next 11 helical transmembrane spans lie at 44–64 (AIAY…NTIV), 78–98 (LELI…ILLW), 109–129 (WVYI…GAAP), 139–159 (VIAG…VSVL), 172–192 (STVV…AFAA), 199–219 (WGFY…MILF), 242–262 (AVIF…GGVV), 268–288 (GTII…IVLL), 319–339 (FLAS…FQFI), 351–371 (LLPL…LMPK), and 373–393 (GLIP…SALM). The N-linked (GlcNAc...) asparagine glycan is linked to N399. A run of 3 helical transmembrane segments spans residues 410–430 (ILVG…VQSL), 439–459 (AVGA…AICG), and 515–535 (SIWA…WPLF).

The protein belongs to the major facilitator superfamily. TCR/Tet family.

It localises to the cell membrane. Efflux pump; part of the gene cluster that mediates the biosynthesis of depudecin, a highly oxidized eleven-carbon linear polyketide that acts as a histone deacetylase (HDAC) inhibitor and makes a small contribution to pathogenesis. Is presumed either to be responsible for exporting depudecin, to provide self-protection, or both. The polypeptide is Efflux pump DEP3 (Fusarium langsethiae).